Consider the following 149-residue polypeptide: UPAR/Ly6 domain-containing protein bou (149 aa).

The first 31 residues, 1-31, serve as a signal peptide directing secretion; it reads MWPPKHAHIGWLSSLALVVLLMSLQMVMVSG. The Extracellular segment spans residues 32–126; that stretch reads IECYVCDTSD…YTCDTDGCNA (95 aa). 5 cysteine pairs are disulfide-bonded: C34–C74, C37–C48, C65–C91, C100–C115, and C119–C124. N-linked (GlcNAc...) asparagine glycosylation occurs at N64. Residue N125 is the site of GPI-anchor amidated asparagine attachment. A propeptide spans 126-149 (removed in mature form); the sequence is AAGRLELEWGVAAALLTLTWLLRH. Residues 127-147 form a helical membrane-spanning segment; sequence AGRLELEWGVAAALLTLTWLL. Residues 148-149 lie on the Cytoplasmic side of the membrane; sequence RH.

Post-translationally, GPI-anchored.

Its subcellular location is the cell membrane. It is found in the cell junction. The protein resides in the septate junction. It localises to the cytoplasm. The protein localises to the cell cortex. Its subcellular location is the secreted. It is found in the apicolateral cell membrane. In terms of biological role, involved in tracheal paracellular barrier functions mediated by epithelial cell septate junctions. Involved in paracellular barrier functions mediated by glial cell septate junctions in the peripheral nervous system, including the chordotonal organs, but not the hemolymph-brain barrier (the insect blood-brain barrier) of the central nervous system. Required for septate junction assembly, possibly by organizing the preassembly and transport of septate junction proteins such as dlg1/disks large 1, Nrx-IV/Neurexin-IV and the claudin protein kune. Involved in chitin fiber organization during tracheal development. Secreted, possibly in association with extracellular vesicles, to act non-autonomously on tissues distant from its site of expression. This chain is UPAR/Ly6 domain-containing protein bou, found in Drosophila melanogaster (Fruit fly).